Here is a 407-residue protein sequence, read N- to C-terminus: MKRTFIMVLDSFGIGASEDAAKFGDQGSDTLGHIAEVCARGEANVGRQGPLTLPNLSRLGLGKAAEESTGTFPQGLDRNADIIGAYAHASELSSGKDTPSGHWEIAGVPVLFDWGYFSDEHNSFPQELLDKLVERANLPGYLGNCHSSGTVILDQLGEEHMKTGKPIFYTSADSVFQIACHEETFGLDRLYELCEIAREELTEGGYNIGRVIARPFLGDKPGNFQRTGNRHDLAVEPPAPTVLKKLVDEKGGEVVSIGKIADIYANVGITKKVKATGIDALFDATLIEMEKAGDNTIVFTNFVDFDSSYGHRRDVAGYAAALELFDRRLPELLKLVKDEDIIIFTADHGCDPTWPGTDHTREHIPVLVYGPKVKPGSLGHRETFADIGQTVASYFGVSPMDYGKSMF.

The Mn(2+) site is built by Asp10, Asp306, His311, Asp347, His348, and His359.

Belongs to the phosphopentomutase family. Requires Mn(2+) as cofactor.

The protein localises to the cytoplasm. The enzyme catalyses 2-deoxy-alpha-D-ribose 1-phosphate = 2-deoxy-D-ribose 5-phosphate. The catalysed reaction is alpha-D-ribose 1-phosphate = D-ribose 5-phosphate. The protein operates within carbohydrate degradation; 2-deoxy-D-ribose 1-phosphate degradation; D-glyceraldehyde 3-phosphate and acetaldehyde from 2-deoxy-alpha-D-ribose 1-phosphate: step 1/2. Its function is as follows. Isomerase that catalyzes the conversion of deoxy-ribose 1-phosphate (dRib-1-P) and ribose 1-phosphate (Rib-1-P) to deoxy-ribose 5-phosphate (dRib-5-P) and ribose 5-phosphate (Rib-5-P), respectively. This chain is Phosphopentomutase, found in Serratia proteamaculans (strain 568).